Here is a 237-residue protein sequence, read N- to C-terminus: Undecaprenyl-diphosphatase (237 aa).

7 helical membrane-spanning segments follow: residues 38-58 (QTAV…LDGI), 65-85 (WRII…GVLF), 92-112 (LFSS…ILMF), 126-146 (MSFL…FPGI), 166-186 (ALQY…ILGL), 191-211 (VTIL…YVLS), and 217-237 (GKIW…YLAG).

Belongs to the UppP family.

It localises to the cell inner membrane. It carries out the reaction di-trans,octa-cis-undecaprenyl diphosphate + H2O = di-trans,octa-cis-undecaprenyl phosphate + phosphate + H(+). Catalyzes the dephosphorylation of undecaprenyl diphosphate (UPP). Confers resistance to bacitracin. The sequence is that of Undecaprenyl-diphosphatase from Thermotoga maritima (strain ATCC 43589 / DSM 3109 / JCM 10099 / NBRC 100826 / MSB8).